A 304-amino-acid polypeptide reads, in one-letter code: Undecaprenyl-diphosphatase (304 aa).

Helical transmembrane passes span Phe-5–Pro-25, Gly-47–Leu-67, Ile-72–Ser-92, Phe-111–Asp-131, Leu-137–Ile-157, Ile-209–Gly-231, Thr-248–Ile-268, and Ile-282–Val-302.

It belongs to the UppP family.

The protein resides in the cell membrane. The enzyme catalyses di-trans,octa-cis-undecaprenyl diphosphate + H2O = di-trans,octa-cis-undecaprenyl phosphate + phosphate + H(+). In terms of biological role, catalyzes the dephosphorylation of undecaprenyl diphosphate (UPP). Confers resistance to bacitracin. The polypeptide is Undecaprenyl-diphosphatase (Clostridium perfringens (strain SM101 / Type A)).